Reading from the N-terminus, the 335-residue chain is Cytoplasmic envelopment protein 2 (335 aa).

Belongs to the herpesviridae cytoplasmic envelopment protein 2 family. In terms of assembly, interacts with cytoplasmic envelopment protein 3 and with the capsid.

The protein resides in the virion tegument. Its subcellular location is the host cytoplasm. The protein localises to the host nucleus. Functionally, plays a critical role in cytoplasmic virus egress. Participates in the final step of tegumentation and envelope acquisition within the host cytoplasm by directly interacting with the capsid. Upon virion binding to target cell, a signaling cascade is triggered to disrupt the interaction with the capsid, thereby preparing capsid uncoating. The chain is Cytoplasmic envelopment protein 2 (U65) from Human herpesvirus 6A (strain Uganda-1102) (HHV-6 variant A).